Consider the following 277-residue polypeptide: Large ribosomal subunit protein uL2 (277 aa).

The segment at 222 to 277 (GVAMNPVDHPHGGGEGRTSGGRHPVTPWGKPTKGKKTRSNKATDKFIMRSRHQRKK) is disordered.

It belongs to the universal ribosomal protein uL2 family. In terms of assembly, part of the 50S ribosomal subunit. Forms a bridge to the 30S subunit in the 70S ribosome.

Functionally, one of the primary rRNA binding proteins. Required for association of the 30S and 50S subunits to form the 70S ribosome, for tRNA binding and peptide bond formation. It has been suggested to have peptidyltransferase activity; this is somewhat controversial. Makes several contacts with the 16S rRNA in the 70S ribosome. The polypeptide is Large ribosomal subunit protein uL2 (Brucella ovis (strain ATCC 25840 / 63/290 / NCTC 10512)).